The chain runs to 343 residues: Probable dual-specificity RNA methyltransferase RlmN (343 aa).

E91 (proton acceptor) is an active-site residue. The Radical SAM core domain occupies H97–D326. An intrachain disulfide couples C104 to C331. Residues C111, C115, and C118 each coordinate [4Fe-4S] cluster. Residues G158–E159, S190, S213–H215, and N289 contribute to the S-adenosyl-L-methionine site. C331 (S-methylcysteine intermediate) is an active-site residue.

This sequence belongs to the radical SAM superfamily. RlmN family. [4Fe-4S] cluster serves as cofactor.

It localises to the cytoplasm. The enzyme catalyses adenosine(2503) in 23S rRNA + 2 reduced [2Fe-2S]-[ferredoxin] + 2 S-adenosyl-L-methionine = 2-methyladenosine(2503) in 23S rRNA + 5'-deoxyadenosine + L-methionine + 2 oxidized [2Fe-2S]-[ferredoxin] + S-adenosyl-L-homocysteine. It catalyses the reaction adenosine(37) in tRNA + 2 reduced [2Fe-2S]-[ferredoxin] + 2 S-adenosyl-L-methionine = 2-methyladenosine(37) in tRNA + 5'-deoxyadenosine + L-methionine + 2 oxidized [2Fe-2S]-[ferredoxin] + S-adenosyl-L-homocysteine. Specifically methylates position 2 of adenine 2503 in 23S rRNA and position 2 of adenine 37 in tRNAs. The sequence is that of Probable dual-specificity RNA methyltransferase RlmN from Thermotoga maritima (strain ATCC 43589 / DSM 3109 / JCM 10099 / NBRC 100826 / MSB8).